A 397-amino-acid chain; its full sequence is Phosphoglycerate kinase (397 aa).

Substrate-binding positions include 21 to 23 (DVN), Arg36, 59 to 62 (HFGR), Arg119, and Arg152. ATP is bound by residues Lys202, Glu324, and 354 to 357 (GGDT).

This sequence belongs to the phosphoglycerate kinase family. As to quaternary structure, monomer.

Its subcellular location is the cytoplasm. The enzyme catalyses (2R)-3-phosphoglycerate + ATP = (2R)-3-phospho-glyceroyl phosphate + ADP. It participates in carbohydrate degradation; glycolysis; pyruvate from D-glyceraldehyde 3-phosphate: step 2/5. The sequence is that of Phosphoglycerate kinase from Cereibacter sphaeroides (strain KD131 / KCTC 12085) (Rhodobacter sphaeroides).